The chain runs to 393 residues: Methylthioribose-1-phosphate isomerase (393 aa).

Catalysis depends on Asp-265, which acts as the Proton donor.

The protein belongs to the eIF-2B alpha/beta/delta subunits family. MtnA subfamily.

It is found in the cytoplasm. The protein localises to the nucleus. It catalyses the reaction 5-(methylsulfanyl)-alpha-D-ribose 1-phosphate = 5-(methylsulfanyl)-D-ribulose 1-phosphate. The protein operates within amino-acid biosynthesis; L-methionine biosynthesis via salvage pathway; L-methionine from S-methyl-5-thio-alpha-D-ribose 1-phosphate: step 1/6. Functionally, catalyzes the interconversion of methylthioribose-1-phosphate (MTR-1-P) into methylthioribulose-1-phosphate (MTRu-1-P). The chain is Methylthioribose-1-phosphate isomerase from Cryptococcus neoformans var. neoformans serotype D (strain JEC21 / ATCC MYA-565) (Filobasidiella neoformans).